A 1257-amino-acid chain; its full sequence is Receptor tyrosine-protein kinase erbB-2 (1257 aa).

The N-terminal stretch at 1-22 is a signal peptide; that stretch reads MELAAWCRWGFLLALLPPGIAG. Over 23-654 the chain is Extracellular; the sequence is TQVCTGTDMK…PAEQRASPVT (632 aa). The cysteines at positions 26 and 53 are disulfide-linked. N-linked (GlcNAc...) asparagine glycans are attached at residues N68 and N188. Intrachain disulfides connect C163–C193, C196–C205, C200–C213, C221–C228, C225–C236, C237–C245, C241–C253, C256–C265, C269–C296, C300–C312, C316–C332, C335–C339, C343–C368, C476–C506, C513–C522, and C517–C530. N260 carries N-linked (GlcNAc...) asparagine glycosylation. A glycan (N-linked (GlcNAc...) asparagine) is linked at N532. 8 disulfides stabilise this stretch: C533-C542, C546-C562, C565-C578, C569-C586, C589-C598, C602-C625, C628-C636, and C632-C644. The N-linked (GlcNAc...) asparagine glycan is linked to N573. A glycan (N-linked (GlcNAc...) asparagine) is linked at N631. A helical transmembrane segment spans residues 655 to 677; sequence FIIATVVGVLLFLILVVVVGILI. A required for interaction with KPNB1 and EEA1 region spans residues 678 to 691; sequence KRRRQKIRKYTMRR. The Nuclear localization signal signature appears at 678–691; the sequence is KRRRQKIRKYTMRR. Over 678-1257 the chain is Cytoplasmic; the sequence is KRRRQKIRKY…PEYLGLDVPV (580 aa). The 268-residue stretch at 722-989 folds into the Protein kinase domain; sequence LRKVKVLGSG…RMARDPQRFV (268 aa). ATP is bound by residues 728–736 and K755; that span reads LGSGAFGTV. The Proton acceptor role is filled by D847. At Y879 the chain carries Phosphotyrosine. A disordered region spans residues 1029–1181; that stretch reads QQGFFSPDPT…PKTLSPGKNG (153 aa). Phosphoserine occurs at positions 1056, 1080, 1085, and 1109. At Y1114 the chain carries Phosphotyrosine. A Phosphotyrosine; by autocatalysis modification is found at Y1141. A compositionally biased stretch (pro residues) spans 1149 to 1163; the sequence is PQPPLTPEGPLPPVR. T1168 is modified (phosphothreonine). The interval 1197 to 1199 is interaction with PIK3C2B; the sequence is EYL. At Y1198 the chain carries Phosphotyrosine. The segment at 1200–1257 is disordered; sequence VPREGTASPPHPSPAFSPAFDNLYYWDQNSSEQGPPPSNFEGTPTAENPEYLGLDVPV. Phosphotyrosine; by autocatalysis is present on Y1250.

It belongs to the protein kinase superfamily. Tyr protein kinase family. EGF receptor subfamily. Homodimer. Heterodimer with EGFR, ERBB3 and ERBB4. Part of a complex with EGFR and either PIK3C2A or PIK3C2B. May interact with PIK3C2B when phosphorylated on Tyr-1198. Interacts with PRKCABP and PLXNB1. Interacts (when phosphorylated on Tyr-1250) with MEMO1. Interacts with MUC1. Interacts (when phosphorylated on Tyr-1141) with GRB7 (via SH2 domain). Interacts (when phosphorylated on Tyr-1250) with ERBIN Interacts with SRC, KPNB1, RANBP2, EEA1, CRM1, CLTC, PTK6, RPA194, MYOC and ACTB. Interacts with HSP90AA1 and HSP90AB1; the interaction suppresses ERBB2 kinase activity. Interacts with SORL1; this interaction regulates ERBB2 subcellular distribution by promoting its recycling after internalization from endosomes back to the plasma membrane, hence stimulates ERBB2-mediated signaling. Interacts with SH3BGRL. Interacts with ROR1. Autophosphorylated. Autophosphorylation occurs in trans, i.e. one subunit of the dimeric receptor phosphorylates tyrosine residues on the other subunit. Ligand-binding increases phosphorylation on tyrosine residues. Signaling via SEMA4C promotes phosphorylation at Tyr-1250. Dephosphorylated by PTPN12.

The protein resides in the cell membrane. It is found in the cell projection. It localises to the ruffle membrane. Its subcellular location is the early endosome. The protein localises to the cytoplasm. The protein resides in the perinuclear region. It is found in the nucleus. The catalysed reaction is L-tyrosyl-[protein] + ATP = O-phospho-L-tyrosyl-[protein] + ADP + H(+). Protein tyrosine kinase that is part of several cell surface receptor complexes, but that apparently needs a coreceptor for ligand binding. Essential component of a neuregulin-receptor complex, although neuregulins do not interact with it alone. GP30 is a potential ligand for this receptor. Regulates outgrowth and stabilization of peripheral microtubules (MTs). Upon ERBB2 activation, the MEMO1-RHOA-DIAPH1 signaling pathway elicits the phosphorylation and thus the inhibition of GSK3B at cell membrane. This prevents the phosphorylation of APC and CLASP2, allowing its association with the cell membrane. In turn, membrane-bound APC allows the localization of MACF1 to the cell membrane, which is required for microtubule capture and stabilization. Interacts (preferentially with the tyrosine phosphorylated form) with CPNE3; this interaction occurs at the cell membrane and is increased in a growth factor heregulin-dependent manner. Its function is as follows. In the nucleus is involved in transcriptional regulation. Associates with the 5'-TCAAATTC-3' sequence in the PTGS2/COX-2 promoter and activates its transcription. Implicated in transcriptional activation of CDKN1A; the function involves STAT3 and SRC. Involved in the transcription of rRNA genes by RNA Pol I and enhances protein synthesis and cell growth. The protein is Receptor tyrosine-protein kinase erbB-2 (Erbb2) of Rattus norvegicus (Rat).